The chain runs to 421 residues: N-succinylarginine dihydrolase (421 aa).

Residues 19–28 (AGLSLGNLAS), Asn-105, and 132–133 (HR) contribute to the substrate site. Residue Glu-167 is part of the active site. Arg-199 is a binding site for substrate. The active site involves His-235. The substrate site is built by Asp-237 and Asn-346. The active-site Nucleophile is the Cys-352.

The protein belongs to the succinylarginine dihydrolase family. In terms of assembly, homodimer.

The enzyme catalyses N(2)-succinyl-L-arginine + 2 H2O + 2 H(+) = N(2)-succinyl-L-ornithine + 2 NH4(+) + CO2. The protein operates within amino-acid degradation; L-arginine degradation via AST pathway; L-glutamate and succinate from L-arginine: step 2/5. Catalyzes the hydrolysis of N(2)-succinylarginine into N(2)-succinylornithine, ammonia and CO(2). The chain is N-succinylarginine dihydrolase from Novosphingobium aromaticivorans (strain ATCC 700278 / DSM 12444 / CCUG 56034 / CIP 105152 / NBRC 16084 / F199).